Consider the following 368-residue polypeptide: RNA polymerase sigma factor SigA (368 aa).

Residues 69 to 90 (LVNEKDSSDTDEKLNPSDLSAP) form a disordered region. Positions 71-83 (NEKDSSDTDEKLN) are enriched in basic and acidic residues. The tract at residues 135 to 205 (LAEANLRLVV…TRAIADQART (71 aa)) is sigma-70 factor domain-2. The Interaction with polymerase core subunit RpoC motif lies at 159–162 (DLIQ). The sigma-70 factor domain-3 stretch occupies residues 214 to 290 (ETINKLIRVQ…DQEAQSPSDH (77 aa)). Residues 303 to 356 (VLDTLTDREENVLRLRFGLDDGRTRTLEEVGKVFGVTRERIRQIEAKALRKLRH) form a sigma-70 factor domain-4 region. Positions 329–348 (LEEVGKVFGVTRERIRQIEA) form a DNA-binding region, H-T-H motif.

It belongs to the sigma-70 factor family. RpoD/SigA subfamily. In terms of assembly, interacts transiently with the RNA polymerase catalytic core.

The protein resides in the cytoplasm. Sigma factors are initiation factors that promote the attachment of RNA polymerase to specific initiation sites and are then released. This sigma factor is the primary sigma factor during exponential growth. The polypeptide is RNA polymerase sigma factor SigA (Staphylococcus aureus (strain N315)).